Reading from the N-terminus, the 208-residue chain is Fusaric acid resistance protein FusD (208 aa).

Residues leucine 7–leucine 29 traverse the membrane as a helical segment.

The protein resides in the cell membrane. Functionally, involved in the resistance (detoxification) of the fungal toxin fusaric acid. This is Fusaric acid resistance protein FusD (fusD) from Burkholderia cepacia (Pseudomonas cepacia).